The sequence spans 248 residues: Triosephosphate isomerase A (248 aa).

Substrate-binding residues include Asn11 and Lys13. The Electrophile role is filled by His95. The active-site Proton acceptor is Glu165.

Belongs to the triosephosphate isomerase family. As to quaternary structure, homodimer.

Its subcellular location is the cytoplasm. The enzyme catalyses dihydroxyacetone phosphate = methylglyoxal + phosphate. The catalysed reaction is D-glyceraldehyde 3-phosphate = dihydroxyacetone phosphate. Its pathway is carbohydrate degradation; glycolysis; D-glyceraldehyde 3-phosphate from glycerone phosphate: step 1/1. It functions in the pathway carbohydrate biosynthesis; gluconeogenesis. Functionally, triosephosphate isomerase is an extremely efficient metabolic enzyme that catalyzes the interconversion between dihydroxyacetone phosphate (DHAP) and D-glyceraldehyde-3-phosphate (G3P) in glycolysis and gluconeogenesis. Its function is as follows. It is also responsible for the non-negligible production of methylglyoxal a reactive cytotoxic side-product that modifies and can alter proteins, DNA and lipids. The sequence is that of Triosephosphate isomerase A (tpi1a) from Danio rerio (Zebrafish).